The chain runs to 87 residues: uncharacterized protein (87 aa).

The chain crosses the membrane as a helical span at residues 21–41 (LSSSLYSVAFFLFFFPNFLFF).

It localises to the membrane. This is an uncharacterized protein from Saccharomyces cerevisiae (strain ATCC 204508 / S288c) (Baker's yeast).